We begin with the raw amino-acid sequence, 260 residues long: Cytochrome c oxidase subunit 3 (260 aa).

Transmembrane regions (helical) follow at residues 30–50 (LILW…VLLV), 81–101 (GMIL…WAFF), 126–146 (FLVP…VTWA), 158–178 (AIQS…LQAW), 196–216 (FFVA…FLAV), and 239–259 (WYWH…YWWG).

Belongs to the cytochrome c oxidase subunit 3 family. As to quaternary structure, component of the cytochrome c oxidase (complex IV, CIV), a multisubunit enzyme composed of a catalytic core of 3 subunits and several supernumerary subunits. The complex exists as a monomer or a dimer and forms supercomplexes (SCs) in the inner mitochondrial membrane with ubiquinol-cytochrome c oxidoreductase (cytochrome b-c1 complex, complex III, CIII).

The protein localises to the mitochondrion inner membrane. It catalyses the reaction 4 Fe(II)-[cytochrome c] + O2 + 8 H(+)(in) = 4 Fe(III)-[cytochrome c] + 2 H2O + 4 H(+)(out). Its function is as follows. Component of the cytochrome c oxidase, the last enzyme in the mitochondrial electron transport chain which drives oxidative phosphorylation. The respiratory chain contains 3 multisubunit complexes succinate dehydrogenase (complex II, CII), ubiquinol-cytochrome c oxidoreductase (cytochrome b-c1 complex, complex III, CIII) and cytochrome c oxidase (complex IV, CIV), that cooperate to transfer electrons derived from NADH and succinate to molecular oxygen, creating an electrochemical gradient over the inner membrane that drives transmembrane transport and the ATP synthase. Cytochrome c oxidase is the component of the respiratory chain that catalyzes the reduction of oxygen to water. Electrons originating from reduced cytochrome c in the intermembrane space (IMS) are transferred via the dinuclear copper A center (CU(A)) of subunit 2 and heme A of subunit 1 to the active site in subunit 1, a binuclear center (BNC) formed by heme A3 and copper B (CU(B)). The BNC reduces molecular oxygen to 2 water molecules using 4 electrons from cytochrome c in the IMS and 4 protons from the mitochondrial matrix. The sequence is that of Cytochrome c oxidase subunit 3 (COIII) from Pisaster ochraceus (Ochre sea star).